The following is an 807-amino-acid chain: MRFLGIAAVATFSTVVSAYPKSTALYNCVSSVFGPSAPQRIVTPNDTTYLDSRLGETIQFDELPVLLAYAQESKEIAPLIRCAKTAGIKAVPRAGGHSFEAYSALNGTLIIDIAHLNYVNVSDDRQTAVVGAGIRLGALYTALSEHGTSFIGGICPTVGLAGFLGSGGFNMQQRSQGLAVEHVLAAKVVLADGRTVVASPDTNPDLFFAIRGGGGGTYGIVVEFTLSLTSIPRSAMLMLSWNDTASRFPAAKQYLDWAPKQIPEFMSQINVYRDKVQVLGWYYGGTEDELRSLVNASGLLDIGKPAVVIAGGCNTDNARAFGYTTMECLPDGKVDVSILNVVPDPFSKVGNSTQFKWNEVPKSTSMPVADPWQRFHRMSKSFFVLKDNPLTDQTLQSLLDRIASLDAKSQVWGEWHAWNISTPSKGSGNAFAWREKAYAHLEFQIHGAPDDKERQSTYENWLEDLESYLRPTVGGASYSGYLDADISTDPLTSYYGGNVCKLVSVKRKTENDYSSSTVEQLFIDSDVNARKITSRYPIPPPDKSIKTEDITLQDCWVRIYTPPSATSSGSVAVFIHGGGWIMGSPDIEDATCRRICRCSGMTVVSVGYRLAPKFQFPTGLNDCVRATLWTLGHFPVSALVIMGGSAGANLAFGVALKLVDAGLGEKVKGVLALVPATVHPDAVPADKRDQYTAMHENANNTVNTLAAMDCFLDAYAAPPHDKYFSVLLHPRLKDLKKVYLVECGTDTLRDDARLMRDALEEAGVPLMYDAYPGYPHYFWSYPSPVLAEASESFHENMLQALAWLDQE.

Positions 1–18 (MRFLGIAAVATFSTVVSA) are cleaved as a signal peptide. Residues Asn45, Asn106, Asn120, Asn242, Asn295, Asn351, Asn419, and Asn699 are each glycosylated (N-linked (GlcNAc...) asparagine). The 172-residue stretch at 60–231 (FDELPVLLAY…VEFTLSLTSI (172 aa)) folds into the FAD-binding PCMH-type domain.

Belongs to the oxygen-dependent FAD-linked oxidoreductase family. The cofactor is FAD.

The protein operates within secondary metabolite biosynthesis. Functionally, FAD-linked oxidoreductase; part of the gene cluster that mediates the biosynthesis of pyranterreones, a family of antioxidative compounds. The first step of pyranonigrins biosynthesis is performed by the hybrid PKS-NRPS synthetase pytA that condenses 4 malonyl-CoA units ato the acetyl starter unit by the modular PKS of pytA. The acyl chain is then connected to an L-serine through the amide bond by the modular NRPS of pytA. A tetramic acid is formed and released from the PKS-NRPS pytA to give pyranterreone 5 with the help of the thioesterase pytI. Pyranterreone 5 could be methylated by pytC to afford pyranterreone 6. Both pyranterreones 5 and 6 are subsequently oxidized by the FAD-linked oxidoreductase pytB and the cytochrome P450 monooxygenase pytD to form the fused gamma-pyrone core, resulting in pyranterreones 7 and 11, respectively. The hydroxy group at C-8 of pyranterreones 7 and 11 are dehydrated by the aspartyl protease pytH to form a delta-7 double bond to give pyranterreones 3 and 1, 2 accordingly. The exo-methylene of pyranterreone 3 could be reduced into a pendant methyl by reductase pytE to provide pyranterreone 4, also known as cordylactam. Pyranterreone 4 can be reconverted to pyranterreone 3 through pytB-catalyzed dehydrogenation or further oxidized to pyranterreones 9 and 10. The polypeptide is FAD-linked oxidoreductase pytB (Aspergillus terreus (strain NIH 2624 / FGSC A1156)).